A 178-amino-acid chain; its full sequence is Inorganic pyrophosphatase (178 aa).

Residues Lys31, Arg45, and Tyr57 each coordinate substrate. 3 residues coordinate Mg(2+): Asp67, Asp72, and Asp104. Tyr141 contributes to the substrate binding site.

It belongs to the PPase family. As to quaternary structure, homohexamer. Mg(2+) is required as a cofactor.

The protein localises to the cytoplasm. The enzyme catalyses diphosphate + H2O = 2 phosphate + H(+). In terms of biological role, catalyzes the hydrolysis of inorganic pyrophosphate (PPi) forming two phosphate ions. In Leptospira interrogans serogroup Icterohaemorrhagiae serovar copenhageni (strain Fiocruz L1-130), this protein is Inorganic pyrophosphatase.